A 116-amino-acid polypeptide reads, in one-letter code: Large ribosomal subunit protein bL17 (116 aa).

This sequence belongs to the bacterial ribosomal protein bL17 family. Part of the 50S ribosomal subunit. Contacts protein L32.

The sequence is that of Large ribosomal subunit protein bL17 from Synechococcus sp. (strain WH7803).